A 442-amino-acid polypeptide reads, in one-letter code: C4-dicarboxylate transport protein (442 aa).

Transmembrane regions (helical) follow at residues 13 to 33 (VLYF…HFYP), 49 to 69 (GIKM…IAGM), 81 to 101 (LALL…LVVV), 149 to 169 (AFAK…GFAL), 193 to 213 (MIAI…AFTI), 227 to 247 (LMGS…GIIA), 312 to 332 (IYLT…MTLL), 336 to 356 (TLLA…GSGF), and 357 to 377 (IVLA…LAII).

Belongs to the dicarboxylate/amino acid:cation symporter (DAACS) (TC 2.A.23) family.

Its subcellular location is the cell membrane. In terms of biological role, responsible for the transport of dicarboxylates such as succinate, fumarate, and malate across the membrane. The sequence is that of C4-dicarboxylate transport protein from Polynucleobacter asymbioticus (strain DSM 18221 / CIP 109841 / QLW-P1DMWA-1) (Polynucleobacter necessarius subsp. asymbioticus).